Reading from the N-terminus, the 509-residue chain is Maturase K (509 aa).

It belongs to the intron maturase 2 family. MatK subfamily.

The protein localises to the plastid. Its subcellular location is the chloroplast. Its function is as follows. Usually encoded in the trnK tRNA gene intron. Probably assists in splicing its own and other chloroplast group II introns. The sequence is that of Maturase K from Clematis florida (Asian virgin's bower).